A 266-amino-acid polypeptide reads, in one-letter code: MYTMGLDIGSTASKGVILKNGEDIVASETISSGTGTTGPSRVLEKLYGKTGLAREDIKKVVVTGYGRMNYSDADKQISELSCHARGVNFIIPETRTIIDIGGQDAKVLKLDNNGRLLNFLMNDKCAAGTGRFLDVMAKIIEVDVSELGSISMNSQNEVSISSTCTVFAESEVISHLSENAKIEDIVAGIHTSVAKRVSSLVKRIGVQRNVVMVGGVARNSGIVRAMAREINTEIIVPDIPQLTGALGAALYAFDEAKESQKEVKNI.

Residues 10–14 (STASK) and 102–104 (GQD) each bind ATP. A [4Fe-4S] cluster-binding site is contributed by C125. D134 is a binding site for ATP. A [4Fe-4S] cluster-binding site is contributed by C164. The ATP site is built by G215 and Q241.

This sequence belongs to the HadI activator family. In terms of assembly, homodimer. [4Fe-4S] cluster is required as a cofactor.

Its function is as follows. Involved in the reductive branch of L-leucine fermentation. Required for the activation of (R)-2-hydroxyisocaproyl-CoA dehydratase. The reduced activator transfers one electron to the dehydratase concomitant with hydrolysis of ATP. This protein is extremely sensitive towards oxygen. The protein is 2-hydroxyisocaproyl-CoA dehydratase activator of Clostridioides difficile (Peptoclostridium difficile).